The sequence spans 313 residues: Protein sprouty homolog 2 (313 aa).

The span at 1-14 (METRVQHGSGSQAL) shows a compositional bias: polar residues. Disordered regions lie at residues 1-31 (METRVQHGSGSQALLQARRDSGRPHGEPDLR) and 54-146 (EYTE…VADG). Composition is skewed to basic and acidic residues over residues 17–31 (ARRDSGRPHGEPDLR) and 78–89 (KSERPHGLPEHR). The segment covering 108 to 131 (SRSISTVSTGSRSSTRTSTSSNSS) has biased composition (low complexity). The segment covering 132–141 (EQRLLGSSSG) has biased composition (polar residues). In terms of domain architecture, SPR spans 175 to 289 (RCEDCGKCKC…CYDRVNRPGC (115 aa)).

Belongs to the sprouty family. As to expression, brain and interlimb region.

It localises to the cytoplasm. The protein localises to the membrane. Functionally, acts as an antagonist of FGF-induced retinal lens fiber differentiation. Inhibits TGFB-induced epithelial-to-mesenchymal transition in retinal lens epithelial cells. May play an important role in FGF-mediated patterning of the mid/hindbrain region by acting to modulate the signaling effects of FGF8. This Gallus gallus (Chicken) protein is Protein sprouty homolog 2 (SPRY2).